Reading from the N-terminus, the 256-residue chain is Pimeloyl-[acyl-carrier protein] methyl ester esterase (256 aa).

Residues 15-242 form the AB hydrolase-1 domain; it reads HLVLLHGWGL…AAHAPFISHP (228 aa). Residues W22, 82-83, and 143-147 contribute to the substrate site; these read SL and FLALQ. Catalysis depends on S82, which acts as the Nucleophile. Active-site residues include D207 and H235. H235 contributes to the substrate binding site.

This sequence belongs to the AB hydrolase superfamily. Carboxylesterase BioH family. Monomer.

The protein resides in the cytoplasm. The catalysed reaction is 6-carboxyhexanoyl-[ACP] methyl ester + H2O = 6-carboxyhexanoyl-[ACP] + methanol + H(+). The protein operates within cofactor biosynthesis; biotin biosynthesis. Functionally, the physiological role of BioH is to remove the methyl group introduced by BioC when the pimeloyl moiety is complete. It allows to synthesize pimeloyl-ACP via the fatty acid synthetic pathway through the hydrolysis of the ester bonds of pimeloyl-ACP esters. In Citrobacter koseri (strain ATCC BAA-895 / CDC 4225-83 / SGSC4696), this protein is Pimeloyl-[acyl-carrier protein] methyl ester esterase.